Here is a 76-residue protein sequence, read N- to C-terminus: MGLCFPCPAESAPPSPSPEEKRAKLAEAAERRQKEAASRGILDIQSVEAKKKKKEQLEKQMETSGPPAGGLRWTVS.

A disordered region spans residues 1 to 76 (MGLCFPCPAE…PAGGLRWTVS (76 aa)). Gly2 is lipidated: N-myristoyl glycine. 2 S-palmitoyl cysteine lipidation sites follow: Cys4 and Cys7. The span at 18–37 (PEEKRAKLAEAAERRQKEAA) shows a compositional bias: basic and acidic residues. The segment at 21–33 (KRAKLAEAAERRQ) is VCP/p97-interacting motif (VIM). A Phosphoserine modification is found at Ser46.

Belongs to the SVIP family. In terms of assembly, interacts with VCP. Forms a complex with VCP/p97 and DERL1. In terms of tissue distribution, ubiquitous. In the adrenal gland, it is expressed in the cortex at all developmental stages.

The protein resides in the membrane. It is found in the smooth endoplasmic reticulum membrane. Its subcellular location is the golgi apparatus membrane. It localises to the cell membrane. The protein localises to the lysosome membrane. In terms of biological role, negative regulator of the ER-associated degradation pathway (ERAD) of misfolded proteins. It competes with AMFR/gp78 for binding VCP/p97, and inhibits AMFR/gp78-VCP/p97 complex formation that is required for degradation of ERAD substrates. Involved in the regulation of adrenal cortisol and dehydroepiandrosterone (DHEA) biosynthesis. In Rattus norvegicus (Rat), this protein is Small VCP/p97-interacting protein (Svip).